The sequence spans 774 residues: Probable E3 ubiquitin-protein ligase HECTD2 (774 aa).

The segment at 1 to 51 (MSEAARDLSPGAPPAVAAAAPEERKGKEPEREKLPPIVTAGAAAGLDRGSK) is disordered. At Ser-9 the chain carries Phosphoserine. Positions 21-34 (PEERKGKEPEREKL) are enriched in basic and acidic residues. The HECT domain occupies 435 to 774 (KRADLKKKLK…ISNSEGFGLE (340 aa)). Residue Cys-742 is the Glycyl thioester intermediate of the active site.

It catalyses the reaction S-ubiquitinyl-[E2 ubiquitin-conjugating enzyme]-L-cysteine + [acceptor protein]-L-lysine = [E2 ubiquitin-conjugating enzyme]-L-cysteine + N(6)-ubiquitinyl-[acceptor protein]-L-lysine.. The protein operates within protein modification; protein ubiquitination. In terms of biological role, E3 ubiquitin-protein ligase which accepts ubiquitin from an E2 ubiquitin-conjugating enzyme in the form of a thioester and then directly transfers the ubiquitin to targeted substrates. The chain is Probable E3 ubiquitin-protein ligase HECTD2 (Hectd2) from Mus musculus (Mouse).